Consider the following 383-residue polypeptide: Adaptive-response sensory kinase SasA (383 aa).

A Histidine kinase domain is found at 152–365; it reads MVAHELRTPL…CFTFNVPIWQ (214 aa). At His155 the chain carries Phosphohistidine; by autocatalysis.

As to quaternary structure, homooligomerizes. Interacts with KaiC. Participates in the KaiABC clock complex, whose core is composed of a KaiC homohexamer, 6 KaiB and up to 6 KaiA dimers. SasA and KaiB(fs) compete to bind to KaiC.

It carries out the reaction ATP + protein L-histidine = ADP + protein N-phospho-L-histidine.. Its function is as follows. Member of the two-component regulatory system SasA/RpaA involved in genome-wide circadian gene expression. One of several clock output pathways. Participates in the Kai clock protein complex, the main circadian regulator in cyanobacteria, via its interaction with KaiC. KaiC enhances the autophosphorylation activity of SasA, which then transfers its phosphate group to RpaA to activate it. In addition to its output function, recruits fold-shifted KaiB (KaiB(fs)) to KaiC to cooperatively form the KaiB(6):KaiC(6) complex (independent of SasA kinase activity). Required for robustness of the circadian rhythm of gene expression and is involved in clock output, also required for adaptation to light/dark cycles. This chain is Adaptive-response sensory kinase SasA, found in Synechococcus sp. (strain CC9311).